The following is a 492-amino-acid chain: Spindle assembly abnormal protein 6 (492 aa).

Residues 46–98 (SGEKELKFEISRSDDFEFLFSETLNNEKYQILARDHDLTVDFDAFPKVIIQHL) enclose the PISA domain. Positions 192–407 (KSADELASLR…KIAHYRAQRF (216 aa)) form a coiled coil.

As to quaternary structure, nine homodimers form a cartwheel structure with an internal diameter of 23 nM and radial spokes connecting to the microtubule triplets. Interacts with sas-5.

The protein localises to the cytoplasm. Its subcellular location is the cytoskeleton. It localises to the microtubule organizing center. It is found in the centrosome. The protein resides in the centriole. In terms of biological role, central scaffolding component of the centrioles ensuring their 9-fold symmetry. Required for centrosome biogenesis and duplication. The polypeptide is Spindle assembly abnormal protein 6 (Caenorhabditis elegans).